Consider the following 221-residue polypeptide: Large ribosomal subunit protein uL3 (221 aa).

The protein belongs to the universal ribosomal protein uL3 family. In terms of assembly, part of the 50S ribosomal subunit. Forms a cluster with proteins L14 and L19.

In terms of biological role, one of the primary rRNA binding proteins, it binds directly near the 3'-end of the 23S rRNA, where it nucleates assembly of the 50S subunit. The chain is Large ribosomal subunit protein uL3 from Chlamydia trachomatis serovar A (strain ATCC VR-571B / DSM 19440 / HAR-13).